The sequence spans 83 residues: Small ribosomal subunit protein bS20 (83 aa).

A disordered region spans residues 60–83; the sequence is ASKGLIHKNKASRDKSRLAAKLAN.

This sequence belongs to the bacterial ribosomal protein bS20 family.

Its function is as follows. Binds directly to 16S ribosomal RNA. In Streptococcus thermophilus (strain CNRZ 1066), this protein is Small ribosomal subunit protein bS20.